A 313-amino-acid chain; its full sequence is Protein MFI (313 aa).

As to quaternary structure, can homodimerize. Interacts with MFF; the interaction inhibits MFF interaction with DNM1L. As to expression, enriched in the pancreatic beta cell and the testis and is expressed at low levels in other tissues tested.

Its subcellular location is the cytoplasm. The protein localises to the cytosol. It is found in the mitochondrion outer membrane. Its function is as follows. Acts as an inhibitor of mitochondrial fission. Interacts with MFF and prevents DNM1L recruitment to mitochondria, promoting a more fused mitochondrial network. In Homo sapiens (Human), this protein is Protein MFI.